The chain runs to 518 residues: GMP synthase [glutamine-hydrolyzing] (518 aa).

A Glutamine amidotransferase type-1 domain is found at 13–203; sequence KIIVLDFGSQ…ALNICGCKGD (191 aa). Cys-90 acts as the Nucleophile in catalysis. Active-site residues include His-177 and Glu-179. The GMPS ATP-PPase domain maps to 204–393; that stretch reads WTMENFSEVE…LGMPDAIVWR (190 aa). 231 to 237 is a binding site for ATP; the sequence is SGGVDSS.

As to quaternary structure, homodimer.

It carries out the reaction XMP + L-glutamine + ATP + H2O = GMP + L-glutamate + AMP + diphosphate + 2 H(+). It participates in purine metabolism; GMP biosynthesis; GMP from XMP (L-Gln route): step 1/1. Catalyzes the synthesis of GMP from XMP. This chain is GMP synthase [glutamine-hydrolyzing], found in Listeria innocua serovar 6a (strain ATCC BAA-680 / CLIP 11262).